A 178-amino-acid polypeptide reads, in one-letter code: MYHQLILMALIGVIMANVVPFSMSNIPEEYKEFIPEEVKNFYKNLTQEDRQILRELASKHATFTNEDAALEALKNKSDKLYQKAVELRNFVKAKIDSLKPDAKAFVDEIIAKVRSLRPEDGQKLDVEKLKQAARDIIAKYEALNEETKEELKAPFPNTTKIITNEKFTRIANSFLQKN.

Positions 1 to 16 (MYHQLILMALIGVIMA) are cleaved as a signal peptide. N-linked (GlcNAc...) asparagine glycans are attached at residues Asn44 and Asn75. Coiled coils occupy residues 67 to 89 (DAAL…ELRN) and 123 to 153 (KLDV…ELKA). Asn157 carries N-linked (GlcNAc...) asparagine glycosylation.

It belongs to the fatty-acid and retinol-binding protein (FARBP) family. Post-translationally, N-glycosylated.

It is found in the secreted. Its function is as follows. Binds retinol and different fatty acids. This chain is Fatty-acid and retinol-binding protein 1, found in Acanthocheilonema viteae (Filarial nematode worm).